The primary structure comprises 64 residues: Cytochrome b-c1 complex subunit 9 (64 aa).

The Mitochondrial matrix portion of the chain corresponds to 2-21 (VAPTLTARLYSLLFRRTSTF). Residues 22–47 (ALTIVVGALFFERAFDQGADAIYEHI) form a helical membrane-spanning segment. Residues 48-64 (NEGKLWKHIKHKYENKE) lie on the Mitochondrial intermembrane side of the membrane.

It belongs to the UQCR10/QCR9 family. As to quaternary structure, component of the ubiquinol-cytochrome c oxidoreductase (cytochrome b-c1 complex, complex III, CIII), a multisubunit enzyme composed of 11 subunits. The complex is composed of 3 respiratory subunits cytochrome b, cytochrome c1 and Rieske protein UQCRFS1, 2 core protein subunits UQCRC1/QCR1 and UQCRC2/QCR2, and 6 low-molecular weight protein subunits UQCRH/QCR6, UQCRB/QCR7, UQCRQ/QCR8, UQCR10/QCR9, UQCR11/QCR10 and subunit 9, the cleavage product of Rieske protein UQCRFS1. The complex exists as an obligatory dimer and forms supercomplexes (SCs) in the inner mitochondrial membrane with NADH-ubiquinone oxidoreductase (complex I, CI) and cytochrome c oxidase (complex IV, CIV), resulting in different assemblies (supercomplex SCI(1)III(2)IV(1) and megacomplex MCI(2)III(2)IV(2)). Interacts with STMP1.

It is found in the mitochondrion inner membrane. Functionally, component of the ubiquinol-cytochrome c oxidoreductase, a multisubunit transmembrane complex that is part of the mitochondrial electron transport chain which drives oxidative phosphorylation. The respiratory chain contains 3 multisubunit complexes succinate dehydrogenase (complex II, CII), ubiquinol-cytochrome c oxidoreductase (cytochrome b-c1 complex, complex III, CIII) and cytochrome c oxidase (complex IV, CIV), that cooperate to transfer electrons derived from NADH and succinate to molecular oxygen, creating an electrochemical gradient over the inner membrane that drives transmembrane transport and the ATP synthase. The cytochrome b-c1 complex catalyzes electron transfer from ubiquinol to cytochrome c, linking this redox reaction to translocation of protons across the mitochondrial inner membrane, with protons being carried across the membrane as hydrogens on the quinol. In the process called Q cycle, 2 protons are consumed from the matrix, 4 protons are released into the intermembrane space and 2 electrons are passed to cytochrome c. The polypeptide is Cytochrome b-c1 complex subunit 9 (UQCR10) (Bos taurus (Bovine)).